Here is a 179-residue protein sequence, read N- to C-terminus: Embryo-specific protein ATS3A (179 aa).

Positions 1–22 (MLRLAIPLFLFALCSFTLFSSA) are cleaved as a signal peptide. Residues 48–158 (CSYTVIIKTS…NSVWYGFNVC (111 aa)) form the PLAT domain.

In terms of assembly, interacts with EULS3 (via N-terminus). In terms of tissue distribution, expressed in roots, rosette leaves, stems, cauline leaves and flowers.

The protein localises to the secreted. In terms of biological role, may play a role during embryo development. This chain is Embryo-specific protein ATS3A, found in Arabidopsis thaliana (Mouse-ear cress).